A 592-amino-acid chain; its full sequence is Aspartate--tRNA(Asp/Asn) ligase (592 aa).

E175 is an L-aspartate binding site. An aspartate region spans residues 199–202 (QLFK). R221 lines the L-aspartate pocket. Residues 221-223 (RDE) and Q230 each bind ATP. Residue H450 coordinates L-aspartate. ATP is bound at residue E483. R490 serves as a coordination point for L-aspartate. 535–538 (GLDR) is a binding site for ATP.

This sequence belongs to the class-II aminoacyl-tRNA synthetase family. Type 1 subfamily. In terms of assembly, homodimer.

The protein localises to the cytoplasm. The enzyme catalyses tRNA(Asx) + L-aspartate + ATP = L-aspartyl-tRNA(Asx) + AMP + diphosphate. Its function is as follows. Aspartyl-tRNA synthetase with relaxed tRNA specificity since it is able to aspartylate not only its cognate tRNA(Asp) but also tRNA(Asn). Reaction proceeds in two steps: L-aspartate is first activated by ATP to form Asp-AMP and then transferred to the acceptor end of tRNA(Asp/Asn). This chain is Aspartate--tRNA(Asp/Asn) ligase, found in Acinetobacter baylyi (strain ATCC 33305 / BD413 / ADP1).